A 467-amino-acid chain; its full sequence is Dimethylamine methyltransferase MtbB3 (467 aa).

Residue pyrrolysine 356 is a non-standard amino acid, pyrrolysine.

This sequence belongs to the dimethylamine methyltransferase family.

It catalyses the reaction Co(I)-[dimethylamine-specific corrinoid protein] + dimethylamine + H(+) = methyl-Co(III)-[dimethylamine-specific corrinoid protein] + methylamine. It functions in the pathway one-carbon metabolism; methanogenesis from dimethylamine. Functionally, catalyzes the transfer of a methyl group from dimethylamine to the corrinoid cofactor of MtbC. The polypeptide is Dimethylamine methyltransferase MtbB3 (mtbB3) (Methanosarcina acetivorans (strain ATCC 35395 / DSM 2834 / JCM 12185 / C2A)).